The following is a 234-amino-acid chain: Peptidase E (234 aa).

Catalysis depends on charge relay system residues serine 123, aspartate 138, and histidine 160.

The protein belongs to the peptidase S51 family.

Its subcellular location is the cytoplasm. It carries out the reaction Dipeptidase E catalyzes the hydrolysis of dipeptides Asp-|-Xaa. It does not act on peptides with N-terminal Glu, Asn or Gln, nor does it cleave isoaspartyl peptides.. Hydrolyzes dipeptides containing N-terminal aspartate residues. May play a role in allowing the cell to use peptide aspartate to spare carbon otherwise required for the synthesis of the aspartate family of amino acids. The sequence is that of Peptidase E from Actinobacillus pleuropneumoniae serotype 5b (strain L20).